Reading from the N-terminus, the 99-residue chain is High mobility group nucleosome-binding domain-containing protein 3 (99 aa).

3 stretches are compositionally biased toward basic and acidic residues: residues Met1 to Arg25, Pro39 to Gly53, and Gly62 to Lys72. The disordered stretch occupies residues Met1–Glu99. The residue at position 6 (Ser6) is a Phosphoserine. A Phosphothreonine modification is found at Thr10. 2 positions are modified to phosphoserine: Ser78 and Ser93. Basic and acidic residues predominate over residues Gly81 to Ser93.

This sequence belongs to the HMGN family. As to quaternary structure, interacts with the ligand binding domain of the thyroid receptor (TR) (in vitro). Requires the presence of thyroid hormone for its interaction. Interacts with transcriptional regulator SEHBP. Interacts with nucleosomes. Expressed in kidney, lung, pancreas, testis, skeletal muscle, heart, thyroid gland, pituitary gland, prostate and uterus. Low expression in liver, spleen, placenta and ovaries.

The protein resides in the nucleus. In terms of biological role, binds to nucleosomes, regulating chromatin structure and consequently, chromatin-dependent processes such as transcription, DNA replication and DNA repair. Affects both insulin and glucagon levels and modulates the expression of pancreatic genes involved in insulin secretion. Regulates the expression of the glucose transporter SLC2A2 by binding specifically to its promoter region and recruiting PDX1 and additional transcription factors. Regulates the expression of SLC6A9, a glycine transporter which regulates the glycine concentration in synaptic junctions in the central nervous system, by binding to its transcription start site. May play a role in ocular development and astrocyte function. The protein is High mobility group nucleosome-binding domain-containing protein 3 (HMGN3) of Homo sapiens (Human).